The following is a 74-amino-acid chain: Protein SlyX homolog (74 aa).

The protein belongs to the SlyX family.

The protein is Protein SlyX homolog of Aliivibrio salmonicida (strain LFI1238) (Vibrio salmonicida (strain LFI1238)).